Here is a 472-residue protein sequence, read N- to C-terminus: RING-H2 finger protein ATL13 (472 aa).

A helical transmembrane segment spans residues 51 to 71 (ILLIIIILSIIFFISGLLHLL). The segment at 134-176 (CAVCLCEFETEDKLRLLPKCSHAFHMDCIDTWLLSHSTCPLCR) adopts an RING-type; atypical zinc-finger fold. The disordered stretch occupies residues 320 to 340 (VSTKKQSSKNRGLPGHRTAMS).

The protein belongs to the RING-type zinc finger family. ATL subfamily.

It is found in the membrane. It catalyses the reaction S-ubiquitinyl-[E2 ubiquitin-conjugating enzyme]-L-cysteine + [acceptor protein]-L-lysine = [E2 ubiquitin-conjugating enzyme]-L-cysteine + N(6)-ubiquitinyl-[acceptor protein]-L-lysine.. It participates in protein modification; protein ubiquitination. This is RING-H2 finger protein ATL13 (ATL13) from Arabidopsis thaliana (Mouse-ear cress).